The sequence spans 654 residues: Probable protein phosphatase 2C 23 (654 aa).

Positions C11–D30 are disordered. The residue at position 147 (S147) is a Phosphoserine. The region spanning D243–L645 is the PPM-type phosphatase domain. Positions 280 and 281 each coordinate Mn(2+). The interval D309–N336 is disordered. Mn(2+)-binding residues include D573 and D636.

The protein belongs to the PP2C family. Mg(2+) serves as cofactor. Requires Mn(2+) as cofactor. Expressed in seedlings, roots, leaves, stems, young inflorescences, flowers and siliques.

The protein resides in the nucleus. It carries out the reaction O-phospho-L-seryl-[protein] + H2O = L-seryl-[protein] + phosphate. It catalyses the reaction O-phospho-L-threonyl-[protein] + H2O = L-threonyl-[protein] + phosphate. In terms of biological role, involved in leaf development regulation. The polypeptide is Probable protein phosphatase 2C 23 (PLL4) (Arabidopsis thaliana (Mouse-ear cress)).